A 656-amino-acid polypeptide reads, in one-letter code: MATTTVVCGGGGDVEGCDGERSLDLLPAALLETIMTKLDVASLCSLASTCKTLKSCVTRVLTFTPNFHIFNVSLSMETVRPLLFPNQQLSSLKLDCGRLGNSAIDILVRPSLREISLHNCRDFSGDLISEIGRKCKDLRLLCLGSVAEKVGRSISRCALEDLLNGCSHLEVLALMFDLSLYLRPGDGRIFGLVSDRLTHLELGHITSRMMTQLLTSTEISGQDSNRVTTSTVLQNVQRLRLSVDCITDAVVKAISKSLPSLIDLDIRDAPLEDPRQVSDLTDFGLHEINQNGKLKHLSLIRSQEFHPTYFRRVSDQGMLFLADKCLGMETICLGGFCRVTDAGFKTILHSCASLSKFSIYHGPKLTDLVFHDILATTLSLSHVSLRRCHLLTDHAIQKLASSLKLENLDLRGCRNLRDETLTAVSHLPKLKVLLLDGADISDTGLSYLKEGVLDSLVSLSVRGCRNLTDKFMSTLFDGSSKLALRELDLSNLPNLTDAAIFALAKSGAPITKLQLRECRLIGDASVMALASTRVYEDECPGSSLCLLDLYDCGGITQLSFKWLKKPFFPRLKWLGITGSVNRDIVDALARRRPHLQVSCRGEELGNDGEDDWDSADIHQHIEAQEDELEQWILGDEGDVEMEDAEDESEEDASEED.

Residues 20-66 enclose the F-box domain; sequence ERSLDLLPAALLETIMTKLDVASLCSLASTCKTLKSCVTRVLTFTPN. 16 LRR repeats span residues 71–96, 120–145, 151–176, 194–221, 243–268, 277–301, 310–335, 336–361, 362–387, 388–412, 413–437, 439–463, 464–491, 492–517, 518–551, and 552–578; these read NVSLSMETVRPLLFPNQQLSSLKLDC, CRDFSGDLISEIGRKCKDLRLLCLGS, GRSISRCALEDLLNGCSHLEVLALMF, SDRLTHLELGHITSRMMTQLLTSTEISG, VDCITDAVVKAISKSLPSLIDLDIRD, VSDLTDFGLHEINQNGKLKHLSLIR, FRRVSDQGMLFLADKCLGMETICLGG, FCRVTDAGFKTILHSCASLSKFSIYH, GPKLTDLVFHDILATTLSLSHVSLRR, CHLLTDHAIQKLASSLKLENLDLRG, CRNLRDETLTAVSHLPKLKVLLLDG, DISDTGLSYLKEGVLDSLVSLSVRG, CRNLTDKFMSTLFDGSSKLALRELDLSN, LPNLTDAAIFALAKSGAPITKLQLRE, CRLIGDASVMALASTRVYEDECPGSSLCLLDLYD, and CGGITQLSFKWLKKPFFPRLKWLGITG. Positions 632–656 are disordered; the sequence is ILGDEGDVEMEDAEDESEEDASEED.

The chain is F-box/LRR-repeat protein 10 (FBL10) from Arabidopsis thaliana (Mouse-ear cress).